We begin with the raw amino-acid sequence, 715 residues long: MDSDDDGDRRRDKFARERRDDDSYRRSGGGGGGYSRYDNKRPAGRREDYQVKRSRGDEGDDGFDPVRGDRNGNGAEPSSENSIYSGPLLPFKRFLTNQEDDISEEDAIKKYNEYKNEHRKFQLDRFFRAHKDEEWFRLKYKPEEAKKVKEVQLENVQKRLQIFNELKEQGQFDKFTLDFEDAEAILRMLDSVVVKLENGSEDDLKAVLAQKLDDESLADVKKENKDAAEKVEDQVKDEVKEEPNEEQEEGAIDDETDKASNKVNIHKTCSVFLRNIPPGLTYEELESTCKKYPGFLRLALTDGIAERRFYRRGWATFKRDVNIKEICWGLNAHRLRETDLNAIINRDITRRVRTNNGVAAHKQVALNDLKLAVKLTALYDKKLGLFNAADESESDREKDIRMGVDLVAASTNPLVKEIKSIVPKDTLNDISEEEAELLGVSNGGDSQSDKVRYERDDTILKALDLLIIYLRIVHSIDFYNHGHYAQEDSMPNRCGLIHVRGQPPSGASINTDENGDLIVPQKFINDFISGFNSRIDKGLIEKQYVSEEDMEKMGKKDGEKEVEAFIAINTVELAKDKWLCPLSGKKFKGPEFIRKHLQSKHEDKLEEARAEADFFNNYLADAQRPVDLEPKHMPHMSRDDHRGGGGDRGYGRERDDDRGPGGGRSSFGNGSYDRRPPFPPRHSLGGRGGGGRMFDDAPRRQPVSYRDLDAPDDIP.

Disordered regions lie at residues 1-87 (MDSD…YSGP), 223-259 (ENKDAAEKVEDQVKDEVKEEPNEEQEEGAIDDETDKA), and 629-715 (EPKH…DDIP). Basic and acidic residues-rich tracts occupy residues 7–25 (GDRRRDKFARERRDDDSYR), 37–57 (YDNKRPAGRREDYQVKRSRGD), and 223–242 (ENKDAAEKVEDQVKDEVKEE). Positions 243 to 256 (PNEEQEEGAIDDET) are enriched in acidic residues. Over residues 629–659 (EPKHMPHMSRDDHRGGGGDRGYGRERDDDRG) the composition is skewed to basic and acidic residues.

The protein belongs to the ARS2 family.

It is found in the nucleus. Its function is as follows. Acts as a mediator between the cap-binding complex (CBC) and the primary microRNAs (miRNAs) processing machinery. Contributes to the stability and delivery of capped primary miRNA transcripts to the primary miRNA processing complex, thereby playing a role in RNA-mediated gene silencing (RNAi) by miRNAs. In Caenorhabditis briggsae, this protein is Serrate RNA effector molecule homolog.